Here is a 296-residue protein sequence, read N- to C-terminus: Phosphatidylglycerol--prolipoprotein diacylglyceryl transferase (296 aa).

Helical transmembrane passes span 10-30, 57-77, 92-112, and 119-139; these read IAFSLGPVKVHWYGLMYLAAF, LLFYGMLGVVLGGRIGYMLFY, VWEGGMSFHGGLLGVLVACWL, and LHFFDVMDFVAPLVPLGLGFG. Residue R140 participates in a 1,2-diacyl-sn-glycero-3-phospho-(1'-sn-glycerol) binding. 3 helical membrane passes run 194 to 214, 220 to 240, and 254 to 274; these read QLYEAALEGVVMFVVLWTFSM, YALSGLFALLYGVFRFIVEFV, and WLTMGQILSLPLIAVGLALLA.

Belongs to the Lgt family.

It localises to the cell inner membrane. It carries out the reaction L-cysteinyl-[prolipoprotein] + a 1,2-diacyl-sn-glycero-3-phospho-(1'-sn-glycerol) = an S-1,2-diacyl-sn-glyceryl-L-cysteinyl-[prolipoprotein] + sn-glycerol 1-phosphate + H(+). It functions in the pathway protein modification; lipoprotein biosynthesis (diacylglyceryl transfer). In terms of biological role, catalyzes the transfer of the diacylglyceryl group from phosphatidylglycerol to the sulfhydryl group of the N-terminal cysteine of a prolipoprotein, the first step in the formation of mature lipoproteins. This chain is Phosphatidylglycerol--prolipoprotein diacylglyceryl transferase, found in Xanthomonas oryzae pv. oryzae (strain MAFF 311018).